A 629-amino-acid chain; its full sequence is tRNA uridine 5-carboxymethylaminomethyl modification enzyme MnmG (629 aa).

FAD-binding positions include 13–18 (GGGHAG), V125, and S180. Position 273–287 (273–287 (GPRYCPSIEDKIHRF)) interacts with NAD(+). Q370 is a binding site for FAD.

This sequence belongs to the MnmG family. As to quaternary structure, homodimer. Heterotetramer of two MnmE and two MnmG subunits. FAD serves as cofactor.

It localises to the cytoplasm. NAD-binding protein involved in the addition of a carboxymethylaminomethyl (cmnm) group at the wobble position (U34) of certain tRNAs, forming tRNA-cmnm(5)s(2)U34. This chain is tRNA uridine 5-carboxymethylaminomethyl modification enzyme MnmG, found in Shewanella sp. (strain MR-7).